The primary structure comprises 298 residues: Tyrosine recombinase XerD (298 aa).

Residues 2–87 form the Core-binding (CB) domain; the sequence is KQDLARIEQF…AVRRLFQYLY (86 aa). A Tyr recombinase domain is found at 108-292; that stretch reads RLPKDLSEAQ…ATERLRQLHQ (185 aa). Residues Arg148, Lys172, His244, Arg247, and His270 contribute to the active site. Tyr279 acts as the O-(3'-phospho-DNA)-tyrosine intermediate in catalysis.

It belongs to the 'phage' integrase family. XerD subfamily. Forms a cyclic heterotetrameric complex composed of two molecules of XerC and two molecules of XerD, in which XerC interacts with XerD via its C-terminal region, XerD interacts with XerC via its C-terminal region and so on.

Its subcellular location is the cytoplasm. Its activity is regulated as follows. FtsK may regulate the catalytic switch between XerC and XerD in the heterotetrameric complex during the two steps of the recombination process. In terms of biological role, site-specific tyrosine recombinase, which acts by catalyzing the cutting and rejoining of the recombining DNA molecules. Binds cooperatively to specific DNA consensus sequences that are separated from XerC binding sites by a short central region, forming the heterotetrameric XerC-XerD complex that recombines DNA substrates. The complex is essential to convert dimers of the bacterial chromosome into monomers to permit their segregation at cell division. It also contributes to the segregational stability of plasmids. In the complex XerD specifically exchanges the bottom DNA strands. The sequence is that of Tyrosine recombinase XerD (xerD) from Escherichia coli O6:H1 (strain CFT073 / ATCC 700928 / UPEC).